We begin with the raw amino-acid sequence, 151 residues long: D-aminoacyl-tRNA deacylase (151 aa).

Positions 137–138 match the Gly-cisPro motif, important for rejection of L-amino acids motif; that stretch reads GP.

This sequence belongs to the DTD family. In terms of assembly, homodimer.

The protein localises to the cytoplasm. The enzyme catalyses glycyl-tRNA(Ala) + H2O = tRNA(Ala) + glycine + H(+). It catalyses the reaction a D-aminoacyl-tRNA + H2O = a tRNA + a D-alpha-amino acid + H(+). Its function is as follows. An aminoacyl-tRNA editing enzyme that deacylates mischarged D-aminoacyl-tRNAs. Also deacylates mischarged glycyl-tRNA(Ala), protecting cells against glycine mischarging by AlaRS. Acts via tRNA-based rather than protein-based catalysis; rejects L-amino acids rather than detecting D-amino acids in the active site. By recycling D-aminoacyl-tRNA to D-amino acids and free tRNA molecules, this enzyme counteracts the toxicity associated with the formation of D-aminoacyl-tRNA entities in vivo and helps enforce protein L-homochirality. The sequence is that of D-aminoacyl-tRNA deacylase from Solibacter usitatus (strain Ellin6076).